A 316-amino-acid chain; its full sequence is Olfactory receptor 10A7 (316 aa).

Residues 1-25 (MICENHTRVTEFILLGFTNNPEMQV) are Extracellular-facing. N-linked (GlcNAc...) asparagine glycosylation occurs at asparagine 5. The chain crosses the membrane as a helical span at residues 26–46 (SLFIFFLAIYTVTLLGNFLIV). The Cytoplasmic portion of the chain corresponds to 47-54 (TVTSVDLA). Residues 55–75 (LQTPMYFFLQNLSLLEVCFTL) form a helical membrane-spanning segment. Over 76–99 (VMVPKMLVDLVSPRKIISFVGCGT) the chain is Extracellular. The chain crosses the membrane as a helical span at residues 100-120 (QMYFFFFFGSSECFLLSMMAY). At 121–139 (DRFVAICNPLHYSVIMNRS) the chain is on the cytoplasmic side. Residues 140 to 160 (LCLWMAIGSWMSGVPVSMLQT) traverse the membrane as a helical segment. Residues 161–197 (AWMMALPFCGPNAVDHFFCDGPPVLKLVTVDTTMYEM) lie on the Extracellular side of the membrane. A helical transmembrane segment spans residues 198–217 (QALASTLLFIMFPFCLILVS). At 218 to 237 (YTRIIITILRMSSATGRQKA) the chain is on the cytoplasmic side. A helical membrane pass occupies residues 238–258 (FSTCSSHLIVVSLFYGTASLT). Over 259 to 271 (YLRPKSNQSPESK) the chain is Extracellular. A helical transmembrane segment spans residues 272 to 292 (KLVSLSYTVITPMLNPIIYGL). The Cytoplasmic segment spans residues 293–316 (RNNEVKGAVKRTITQKVLQKLDVF).

The protein belongs to the G-protein coupled receptor 1 family.

The protein localises to the cell membrane. In terms of biological role, odorant receptor. In Homo sapiens (Human), this protein is Olfactory receptor 10A7 (OR10A7).